We begin with the raw amino-acid sequence, 322 residues long: Acetyl-coenzyme A carboxylase carboxyl transferase subunit beta (322 aa).

One can recognise a CoA carboxyltransferase N-terminal domain in the interval L24 to D293.

It belongs to the AccD/PCCB family. In terms of assembly, acetyl-CoA carboxylase is a heterohexamer composed of biotin carboxyl carrier protein (AccB), biotin carboxylase (AccC) and two subunits each of ACCase subunit alpha (AccA) and ACCase subunit beta (AccD).

The protein resides in the cytoplasm. It carries out the reaction N(6)-carboxybiotinyl-L-lysyl-[protein] + acetyl-CoA = N(6)-biotinyl-L-lysyl-[protein] + malonyl-CoA. It participates in lipid metabolism; malonyl-CoA biosynthesis; malonyl-CoA from acetyl-CoA: step 1/1. Component of the acetyl coenzyme A carboxylase (ACC) complex. Biotin carboxylase (BC) catalyzes the carboxylation of biotin on its carrier protein (BCCP) and then the CO(2) group is transferred by the transcarboxylase to acetyl-CoA to form malonyl-CoA. The sequence is that of Acetyl-coenzyme A carboxylase carboxyl transferase subunit beta from Rhodopseudomonas palustris (strain BisB5).